A 560-amino-acid polypeptide reads, in one-letter code: Trafficking protein particle complex II-specific subunit 65 (560 aa).

A disordered region spans residues 164–193 (SSKNTNNHLEKNNRATHRVSSKNSEVHEAD). Phosphoserine occurs at positions 393 and 398.

Part of the multisubunit TRAPP (transport protein particle) II complex composed of BET3, BET5, TRS20, TRS23, TRS31, TRS33, TRS65, TRS120 and TRS130. Interacts directly with TRS120 and TRS130.

It is found in the cytoplasm. It localises to the golgi apparatus. The protein resides in the cis-Golgi network. Its pathway is glycan metabolism; beta-glucan biosynthesis. Functionally, specific subunit of the TRAPP II complex, a highly conserved vesicle tethering complex that functions in the late Golgi as a guanine nucleotide exchanger (GEF) for the Golgi YPT1 GTPase. TRS65 plays a role in the YPT GEF activity of TRAPP II in concert with the two other TRAPP II-specific subunits TRS120 and TRS130. Involved in cell wall (1--&gt;6)-beta-glucan synthesis. This is Trafficking protein particle complex II-specific subunit 65 (TRS65) from Saccharomyces cerevisiae (strain ATCC 204508 / S288c) (Baker's yeast).